The primary structure comprises 521 residues: Probable rhamnogalacturonase B (521 aa).

The N-terminal stretch at 1–21 is a signal peptide; that stretch reads MRLHAFTLLSLLGLVPSFAAA. Cysteines 42 and 68 form a disulfide. An N-linked (GlcNAc...) asparagine glycan is attached at Asn-145. Asp-219 serves as the catalytic Proton donor. Cysteines 221 and 238 form a disulfide. Asn-239 is a glycosylation site (N-linked (GlcNAc...) asparagine). The active site involves His-294. Asn-321 carries an N-linked (GlcNAc...) asparagine glycan. Intrachain disulfides connect Cys-344–Cys-350 and Cys-372–Cys-381. The tract at residues 462–521 is disordered; the sequence is ETPAAASRSEQVVQGAPQETGQSAPESAGPVPSGNPGPVPTGGSRPSRHRHGHHHFGSAI. Polar residues predominate over residues 469–486; that stretch reads RSEQVVQGAPQETGQSAP. The span at 507–521 shows a compositional bias: basic residues; the sequence is PSRHRHGHHHFGSAI.

This sequence belongs to the glycosyl hydrolase 28 family.

It is found in the secreted. It catalyses the reaction Endohydrolysis of alpha-D-GalA-(1-&gt;2)-alpha-L-Rha glycosidic bond in the rhamnogalacturonan I backbone with initial inversion of anomeric configuration releasing oligosaccharides with beta-D-GalA at the reducing end.. Its function is as follows. Pectinolytic enzymes consist of four classes of enzymes: pectine lyase, polygalacturonase, pectin methylesterase and rhamnogalacturonase. Hydrolyzes alpha-D-galacturonopyranosyl-(1,2)-alpha-L-rhamnopyranosyl linkages in the backbone of the hairy regions of pectins. This is Probable rhamnogalacturonase B (rhgB) from Aspergillus fumigatus (strain ATCC MYA-4609 / CBS 101355 / FGSC A1100 / Af293) (Neosartorya fumigata).